The following is a 520-amino-acid chain: Anthranilate synthase component 1 (520 aa).

L-tryptophan contacts are provided by residues Ser-40 and 291 to 293 (PYM). 328–329 (GT) serves as a coordination point for chorismate. Position 361 (Glu-361) interacts with Mg(2+). Residues Tyr-449, Arg-469, 483 to 485 (GAG), and Gly-485 each bind chorismate. Glu-498 is a binding site for Mg(2+).

It belongs to the anthranilate synthase component I family. In terms of assembly, heterotetramer consisting of two non-identical subunits: a beta subunit (TrpG) and a large lpha subunit (TrpE). Requires Mg(2+) as cofactor.

The enzyme catalyses chorismate + L-glutamine = anthranilate + pyruvate + L-glutamate + H(+). The protein operates within amino-acid biosynthesis; L-tryptophan biosynthesis; L-tryptophan from chorismate: step 1/5. With respect to regulation, cooperatively feedback inhibited by tryptophan. In terms of biological role, part of a heterotetrameric complex that catalyzes the two-step biosynthesis of anthranilate, an intermediate in the biosynthesis of L-tryptophan. In the first step, the glutamine-binding beta subunit (TrpG) of anthranilate synthase (AS) provides the glutamine amidotransferase activity which generates ammonia as a substrate that, along with chorismate, is used in the second step, catalyzed by the large alpha subunit of AS (TrpE) to produce anthranilate. In the absence of TrpG, TrpE can synthesize anthranilate directly from chorismate and high concentrations of ammonia. This is Anthranilate synthase component 1 (trpE) from Escherichia coli (strain K12).